The chain runs to 477 residues: Probable cytosolic Fe-S cluster assembly factor GL21135 (477 aa).

Positions 23, 69, 72, 75, 188, 244, 396, and 400 each coordinate [4Fe-4S] cluster.

Belongs to the NARF family.

Its function is as follows. Component of the cytosolic iron-sulfur (Fe/S) protein assembly machinery. Required for maturation of extramitochondrial Fe/S proteins. In Drosophila persimilis (Fruit fly), this protein is Probable cytosolic Fe-S cluster assembly factor GL21135.